The following is a 1042-amino-acid chain: Isoleucine--tRNA ligase (1042 aa).

The 'HIGH' region signature appears at 59-69; the sequence is PFANGLPHYGH. The 'KMSKS' region motif lies at 619–623; the sequence is KMSKS. Residue Lys622 coordinates ATP.

Belongs to the class-I aminoacyl-tRNA synthetase family. IleS type 2 subfamily. In terms of assembly, monomer. The cofactor is Zn(2+).

It is found in the cytoplasm. The enzyme catalyses tRNA(Ile) + L-isoleucine + ATP = L-isoleucyl-tRNA(Ile) + AMP + diphosphate. Its function is as follows. Catalyzes the attachment of isoleucine to tRNA(Ile). As IleRS can inadvertently accommodate and process structurally similar amino acids such as valine, to avoid such errors it has two additional distinct tRNA(Ile)-dependent editing activities. One activity is designated as 'pretransfer' editing and involves the hydrolysis of activated Val-AMP. The other activity is designated 'posttransfer' editing and involves deacylation of mischarged Val-tRNA(Ile). This Nocardia farcinica (strain IFM 10152) protein is Isoleucine--tRNA ligase.